A 152-amino-acid chain; its full sequence is MEQNEQPVFGIEKLYVKDLSVEVPNAPEIFLEREQPQVEIQLNTGGRAVGDGVYEVVLTVTVTAKMPEKTVFLVEVGQAGIFRIQNVPEEQLEPLIAVACPNILFPYAREAVSDAVSRAGFQPIVLQPVNFEGMYMQRLQEQAGAPAEVPIQ.

The protein belongs to the SecB family. In terms of assembly, homotetramer, a dimer of dimers. One homotetramer interacts with 1 SecA dimer.

The protein resides in the cytoplasm. In terms of biological role, one of the proteins required for the normal export of preproteins out of the cell cytoplasm. It is a molecular chaperone that binds to a subset of precursor proteins, maintaining them in a translocation-competent state. It also specifically binds to its receptor SecA. In Dechloromonas aromatica (strain RCB), this protein is Protein-export protein SecB.